Reading from the N-terminus, the 304-residue chain is Secreted mono- and diacylglycerol lipase MDL3 (304 aa).

An N-terminal signal peptide occupies residues 1 to 19 (MIVGPVISLLLSYFVLVSG). The cysteines at positions 55 and 297 are disulfide-linked. The N-linked (GlcNAc...) asparagine glycan is linked to Asn-161. The Nucleophile role is filled by Ser-171. Catalysis depends on residues Asp-228 and His-281.

It belongs to the AB hydrolase superfamily. Lipase family. Class 3 subfamily.

Its subcellular location is the secreted. The protein resides in the cell wall. It carries out the reaction a monoacylglycerol + H2O = glycerol + a fatty acid + H(+). The enzyme catalyses a diacylglycerol + H2O = a monoacylglycerol + a fatty acid + H(+). Functionally, secreted lipase involved in Dandruff and seborrheic dermatitis (D/SD) probably via lipase-mediated breakdown of sebaceous lipids and release of irritating free fatty acids. Shows activity against monoglyceride and diglyceride substrates, but not triglyceride substrates and does not exhibit regio-selective production of diacylglycerols. Hydrolyzes distearin, dilinolein, dipalmitoylglycerol and dipalmitolein. Cleaves oleic acid from 1,2 isomers of diolein on both the 1 and the 2 position of the glycerol backbone, resulting mainly in free fatty acids but no monoolein is detected. Shows activity on monoolein and liberates mostly free fatty acids, but can also perform the reverse reaction and produce diolein. This chain is Secreted mono- and diacylglycerol lipase MDL3, found in Malassezia globosa (strain ATCC MYA-4612 / CBS 7966) (Dandruff-associated fungus).